A 301-amino-acid chain; its full sequence is Putative MgpC-like protein MPN_093 (301 aa).

This sequence belongs to the MgpC family.

This chain is Putative MgpC-like protein MPN_093, found in Mycoplasma pneumoniae (strain ATCC 29342 / M129 / Subtype 1) (Mycoplasmoides pneumoniae).